Here is a 355-residue protein sequence, read N- to C-terminus: Capsid protein VP1/VP2 (355 aa).

Residues 1 to 21 are compositionally biased toward basic and acidic residues; it reads MADSTTMEHDGRGTKRKREAD. The interval 1–41 is disordered; sequence MADSTTMEHDGRGTKRKREADGGSGQGVGKGNSNAVKEGYG.

This sequence belongs to the parvoviridae capsid protein family.

It localises to the virion. Functionally, capsid protein self-assembles to form an icosahedral capsid with a T=1 symmetry, about 22 nm in diameter, and consisting of 60 copies of size variants of the capsid proteins, which differ in the N-terminushe capsid encapsulates the genomic ssDNA. Capsid proteins are responsible for the attachment to host cell receptors. This attachment induces virion internalization predominantly through clathrin-dependent endocytosis. The polypeptide is Capsid protein VP1/VP2 (VP) (Aedes albopictus densovirus (isolate Boublik/1994) (AalDNV)).